Consider the following 602-residue polypeptide: Na(+)/dicarboxylate cotransporter 3 (602 aa).

The Cytoplasmic segment spans residues 1–16; sequence MAALAAAAKKVWSARR. Residues 17–37 form a helical membrane-spanning segment; sequence LLVLLFTPLALLPVVFALPPK. Residues 38-55 lie on the Extracellular side of the membrane; the sequence is EGRCLFVILLMAVYWCTE. Residues 56-76 form a helical membrane-spanning segment; it reads ALPLSVTALLPIVLFPFMGIL. At 77 to 82 the chain is on the cytoplasmic side; that stretch reads PSNKVC. The helical transmembrane segment at 83 to 103 threads the bilayer; the sequence is PQYFLDTNFLFLSGLIMASAI. The Extracellular segment spans residues 104–137; that stretch reads EEWNLHRRIALKILMLVGVQPARLILGMMVTTSF. The chain crosses the membrane as a helical span at residues 138-158; that stretch reads LSMWLSNTASTAMMLPIANAI. At 159–229 the chain is on the cytoplasmic side; sequence LKSLFGQKEV…SRKEDEYRRN (71 aa). The helical transmembrane segment at 230–250 threads the bilayer; the sequence is IWKGFLISIPYSASIGGTATL. Topologically, residues 251 to 278 are extracellular; the sequence is TGTAPNLILLGQLKSFFPQCDVVNFGSW. A helical transmembrane segment spans residues 279–299; the sequence is FIFAFPLMLLFLLAGWLWISF. Residues 300-336 lie on the Cytoplasmic side of the membrane; it reads LYGGLSFRGWRKNKSEIRTNAEDRARAVIREEYQNLG. A helical membrane pass occupies residues 337 to 357; that stretch reads PIKFAEQAVFILFCMFAILLF. The Extracellular segment spans residues 358–372; it reads TRDPKFIPGWASLFN. Residues 373-393 traverse the membrane as a helical segment; it reads PGFLSDAVTGVAIVTILFFFP. Over 394 to 422 the chain is Cytoplasmic; it reads SQRPSLKWWFDFKAPNTETEPLLTWKKAQ. The segment at residues 423–443 is an intramembrane region (helical); sequence ETVPWNIILLLGGGFAMAKGC. The Cytoplasmic segment spans residues 444–461; the sequence is EESGLSVWIGGQLHPLEN. A helical transmembrane segment spans residues 462 to 482; it reads VPPALAVLLITVVIAFFTEFA. Over 483–505 the chain is Extracellular; it reads SNTATIIIFLPVLAELAIRLRVH. A helical transmembrane segment spans residues 506–526; sequence PLYLMIPGTVGCSFAFMLPVS. The Cytoplasmic portion of the chain corresponds to 527–546; it reads TPPNSIAFASGHLLVKDMVR. A helical membrane pass occupies residues 547 to 567; the sequence is TGLLMNLMGVLLLSLAMNTWA. Topologically, residues 568–602 are extracellular; sequence QTIFQLGTFPDWADMYSVNVTALPPTLANDTFRTL. 2 N-linked (GlcNAc...) asparagine glycosylation sites follow: N586 and N596.

The protein belongs to the SLC13A/DASS transporter (TC 2.A.47) family. NADC subfamily. Expression is highest in kidney. Detected in placenta, brain, liver and pancreas.

The protein localises to the cell membrane. It carries out the reaction succinate(out) + 3 Na(+)(out) = succinate(in) + 3 Na(+)(in). It catalyses the reaction 2-oxoglutarate(out) + 3 Na(+)(out) = 2-oxoglutarate(in) + 3 Na(+)(in). The enzyme catalyses N-acetyl-L-aspartate(out) + 3 Na(+)(out) = N-acetyl-L-aspartate(in) + 3 Na(+)(in). The catalysed reaction is glutarate(out) + 3 Na(+)(out) = glutarate(in) + 3 Na(+)(in). It carries out the reaction fumarate(out) + 3 Na(+)(out) = fumarate(in) + 3 Na(+)(in). It catalyses the reaction malate(out) + 3 Na(+)(out) = malate(in) + 3 Na(+)(in). The enzyme catalyses 2,2-dimethylsuccinate(out) + 3 Na(+)(out) = 2,2-dimethylsuccinate(in) + 3 Na(+)(in). The catalysed reaction is 2,3-dimethylsuccinate(out) + 3 Na(+)(out) = 2,3-dimethylsuccinate(in) + 3 Na(+)(in). It carries out the reaction itaconate(out) + 3 Na(+)(out) = itaconate(in) + 3 Na(+)(in). Its activity is regulated as follows. Li(+) decreases succinate transport in the presence of Na(+). Functionally, high-affinity sodium-dicarboxylate cotransporter that accepts a range of substrates with 4-6 carbon atoms, such as the citric acid cycle intermediates succinate and alpha-ketoglutarate (2-oxoglutarate), as well as other compounds including N-acetyl-L-aspartate. Transports the dicarboxylate into the cell with a probable stoichiometry of 3 Na(+) for 1 divalent dicarboxylate, rendering the process electrogenic. Can transport citrate in a Na(+)-dependent manner, recognizing the divalent form of citrate rather than the trivalent form which is normally found in blood. Imports itaconate in hepatocytes leading to activation of TFEB-dependent lysosomal biogenesis involved in antibacterial innate immune response. This Homo sapiens (Human) protein is Na(+)/dicarboxylate cotransporter 3 (SLC13A3).